Reading from the N-terminus, the 50-residue chain is MNPFFYFVQLFFYYPFFIIFLYIYLVFFIPKTNNINFSNIFPLFSKWIKK.

The chain crosses the membrane as a helical span at residues 10 to 29 (LFFYYPFFIIFLYIYLVFFI).

The protein localises to the plastid. The protein resides in the chloroplast membrane. This is an uncharacterized protein from Marchantia polymorpha (Common liverwort).